The primary structure comprises 147 residues: Large ribosomal subunit protein uL16 (147 aa).

Belongs to the universal ribosomal protein uL16 family. Part of the 50S ribosomal subunit.

Functionally, binds 23S rRNA and is also seen to make contacts with the A and possibly P site tRNAs. The polypeptide is Large ribosomal subunit protein uL16 (Clostridium botulinum (strain ATCC 19397 / Type A)).